A 133-amino-acid chain; its full sequence is U-scoloptoxin(11)-Sm1a (133 aa).

Residues 1-19 form the signal peptide; sequence MIWFLAFILFLAAGELVSS.

This sequence belongs to the scoloptoxin-11 family. Contains 10 disulfide bonds. In terms of tissue distribution, expressed by the venom gland.

The protein resides in the secreted. The protein is U-scoloptoxin(11)-Sm1a of Scolopendra morsitans (Tanzanian blue ringleg centipede).